The chain runs to 86 residues: Mu-theraphotoxin-Cg2a 2 (86 aa).

An N-terminal signal peptide occupies residues 1–21 (MKVSVVITLAVLGVMFVWASA). The propeptide occupies 22–50 (AELEERGSDQRDSPAWIKSMERIFQSEER). 3 disulfide bridges follow: C52-C66, C59-C71, and C65-C78. F84 carries the phenylalanine amide modification.

This sequence belongs to the neurotoxin 10 (Hwtx-1) family. 37 (Jztx-31) subfamily. In terms of tissue distribution, expressed by the venom gland.

The protein resides in the secreted. Its function is as follows. Inhibits both peak current and fast inactivation of voltage-gated sodium channels (Nav) channels. Inhibits the inactivation of Nav on DRG neurons (EC(50)=1.77 uM) and peak current of cardiac myocytes (IC(50)=0.90 uM). The chain is Mu-theraphotoxin-Cg2a 2 from Chilobrachys guangxiensis (Chinese earth tiger tarantula).